The chain runs to 309 residues: Wall-associated proteinase (309 aa).

2 N-linked (GlcNAc...) asparagine glycosylation sites follow: N190 and N295.

It is found in the secreted. Its subcellular location is the cell wall. It localises to the membrane. May participate in wall plasticization and/or intussusception or in cell wall turnover. This Coccidioides immitis (strain RS) (Valley fever fungus) protein is Wall-associated proteinase.